We begin with the raw amino-acid sequence, 58 residues long: Photosystem II reaction center protein K (58 aa).

A propeptide spanning residues methionine 1–alanine 21 is cleaved from the precursor. A helical membrane pass occupies residues isoleucine 29–phenylalanine 49.

It belongs to the PsbK family. In terms of assembly, PSII is composed of 1 copy each of membrane proteins PsbA, PsbB, PsbC, PsbD, PsbE, PsbF, PsbH, PsbI, PsbJ, PsbK, PsbL, PsbM, PsbT, PsbX, PsbY, PsbZ, Psb30/Ycf12, at least 3 peripheral proteins of the oxygen-evolving complex and a large number of cofactors. It forms dimeric complexes.

The protein localises to the plastid. The protein resides in the chloroplast thylakoid membrane. One of the components of the core complex of photosystem II (PSII). PSII is a light-driven water:plastoquinone oxidoreductase that uses light energy to abstract electrons from H(2)O, generating O(2) and a proton gradient subsequently used for ATP formation. It consists of a core antenna complex that captures photons, and an electron transfer chain that converts photonic excitation into a charge separation. In Zygnema circumcarinatum (Green alga), this protein is Photosystem II reaction center protein K.